The sequence spans 446 residues: Na(+)-translocating NADH-quinone reductase subunit A (446 aa).

This sequence belongs to the NqrA family. As to quaternary structure, composed of six subunits; NqrA, NqrB, NqrC, NqrD, NqrE and NqrF.

It catalyses the reaction a ubiquinone + n Na(+)(in) + NADH + H(+) = a ubiquinol + n Na(+)(out) + NAD(+). In terms of biological role, NQR complex catalyzes the reduction of ubiquinone-1 to ubiquinol by two successive reactions, coupled with the transport of Na(+) ions from the cytoplasm to the periplasm. NqrA to NqrE are probably involved in the second step, the conversion of ubisemiquinone to ubiquinol. In Aliivibrio salmonicida (strain LFI1238) (Vibrio salmonicida (strain LFI1238)), this protein is Na(+)-translocating NADH-quinone reductase subunit A.